Here is a 279-residue protein sequence, read N- to C-terminus: uncharacterized protein (279 aa).

An HTH rpiR-type domain is found at 1-77; that stretch reads MGILEQLENP…VTLAKEISNK (77 aa). Positions 37–56 form a DNA-binding region, H-T-H motif; the sequence is ISIIAKESGVGEATITRFTK. Residues 123 to 263 form the SIS domain; that stretch reads CRDLIMNAKR…YTEVIKEMFS (141 aa).

This is an uncharacterized protein from Clostridium perfringens (strain 13 / Type A).